A 147-amino-acid chain; its full sequence is Probable WRKY transcription factor 45 (147 aa).

The disordered stretch occupies residues 21–52 (TEFHGVDNSAQPTTSSEEKPRSKKKKKEREAR). The segment at residues 59 to 124 (SQVDILDDGY…YQGVHTHAVD (66 aa)) is a DNA-binding region (WRKY). Zn(2+) is bound by residues C90, C95, H119, and H121.

Belongs to the WRKY group I family.

It localises to the nucleus. Its function is as follows. Transcription factor. Interacts specifically with the W box (5'-(T)TGAC[CT]-3'), a frequently occurring elicitor-responsive cis-acting element. The protein is Probable WRKY transcription factor 45 (WRKY45) of Arabidopsis thaliana (Mouse-ear cress).